The sequence spans 432 residues: uncharacterized protein (432 aa).

The next 13 membrane-spanning stretches (helical) occupy residues 7–27, 29–49, 68–88, 124–144, 156–176, 196–216, 241–261, 266–286, 291–311, 326–346, 358–378, 379–399, and 412–432; these read FIGLGIITASLIFGSSLPDIY, GIVILIVAGCLWFFELLPLPV, EALTYFAHPIIFLFLGGFMLA, FLSMWISNTSATLILLPIALG, FLLLGVAYSASIGGIATIIGS, VGFPISLLLFLICTLTLYIYF, LVIFVLIASLWIISDYLSEIF, FDSVIAIFAIILLFVFNLVEV, KIDWGTLILFGGALCLGGVIV, ILGNLTPIVLLFLVVTITIIL, IIVPILFGVSLGIPKEILILA, VGMSASCSFILPVGTPPNAIV, and IGMILSILSAAVITLYSILYL.

Belongs to the CitM (TC 2.A.11) transporter family.

The protein resides in the cell membrane. This is an uncharacterized protein from Methanocaldococcus jannaschii (strain ATCC 43067 / DSM 2661 / JAL-1 / JCM 10045 / NBRC 100440) (Methanococcus jannaschii).